Consider the following 180-residue polypeptide: Large ribosomal subunit protein uL5 (180 aa).

The protein belongs to the universal ribosomal protein uL5 family. As to quaternary structure, part of the 50S ribosomal subunit; part of the 5S rRNA/L5/L18/L25 subcomplex. Contacts the 5S rRNA and the P site tRNA. Forms a bridge to the 30S subunit in the 70S ribosome.

In terms of biological role, this is one of the proteins that bind and probably mediate the attachment of the 5S RNA into the large ribosomal subunit, where it forms part of the central protuberance. In the 70S ribosome it contacts protein S13 of the 30S subunit (bridge B1b), connecting the 2 subunits; this bridge is implicated in subunit movement. Contacts the P site tRNA; the 5S rRNA and some of its associated proteins might help stabilize positioning of ribosome-bound tRNAs. The polypeptide is Large ribosomal subunit protein uL5 (Mesoplasma florum (strain ATCC 33453 / NBRC 100688 / NCTC 11704 / L1) (Acholeplasma florum)).